The chain runs to 306 residues: Bifunctional protein FolD (306 aa).

NADP(+) contacts are provided by residues 164 to 166 (GRS), S189, and T230.

Belongs to the tetrahydrofolate dehydrogenase/cyclohydrolase family. As to quaternary structure, homodimer.

It carries out the reaction (6R)-5,10-methylene-5,6,7,8-tetrahydrofolate + NADP(+) = (6R)-5,10-methenyltetrahydrofolate + NADPH. The enzyme catalyses (6R)-5,10-methenyltetrahydrofolate + H2O = (6R)-10-formyltetrahydrofolate + H(+). It functions in the pathway one-carbon metabolism; tetrahydrofolate interconversion. Its function is as follows. Catalyzes the oxidation of 5,10-methylenetetrahydrofolate to 5,10-methenyltetrahydrofolate and then the hydrolysis of 5,10-methenyltetrahydrofolate to 10-formyltetrahydrofolate. In Solibacter usitatus (strain Ellin6076), this protein is Bifunctional protein FolD.